The primary structure comprises 159 residues: Nucleotide-binding protein PLES_47741 (159 aa).

It belongs to the YajQ family.

In terms of biological role, nucleotide-binding protein. This Pseudomonas aeruginosa (strain LESB58) protein is Nucleotide-binding protein PLES_47741.